The chain runs to 242 residues: 1-(5-phosphoribosyl)-5-[(5-phosphoribosylamino)methylideneamino] imidazole-4-carboxamide isomerase (242 aa).

The active-site Proton acceptor is D7. D129 acts as the Proton donor in catalysis.

This sequence belongs to the HisA/HisF family.

It is found in the cytoplasm. It carries out the reaction 1-(5-phospho-beta-D-ribosyl)-5-[(5-phospho-beta-D-ribosylamino)methylideneamino]imidazole-4-carboxamide = 5-[(5-phospho-1-deoxy-D-ribulos-1-ylimino)methylamino]-1-(5-phospho-beta-D-ribosyl)imidazole-4-carboxamide. Its pathway is amino-acid biosynthesis; L-histidine biosynthesis; L-histidine from 5-phospho-alpha-D-ribose 1-diphosphate: step 4/9. This is 1-(5-phosphoribosyl)-5-[(5-phosphoribosylamino)methylideneamino] imidazole-4-carboxamide isomerase from Pseudoalteromonas translucida (strain TAC 125).